We begin with the raw amino-acid sequence, 607 residues long: V-type proton ATPase catalytic subunit A (607 aa).

An ATP-binding site is contributed by 246 to 253; sequence GAFGCGKT.

Belongs to the ATPase alpha/beta chains family. In terms of assembly, V-ATPase is a heteromultimeric enzyme composed of a peripheral catalytic V1 complex (components A to H) attached to an integral membrane V0 proton pore complex (components: a, c, c', c'', d, e, f and VOA1).

Its subcellular location is the vacuole membrane. It carries out the reaction ATP + H2O + 4 H(+)(in) = ADP + phosphate + 5 H(+)(out). Functionally, catalytic subunit of the V1 complex of vacuolar(H+)-ATPase (V-ATPase), a multisubunit enzyme composed of a peripheral complex (V1) that hydrolyzes ATP and a membrane integral complex (V0) that translocates protons. V-ATPase is responsible for acidifying and maintaining the pH of intracellular compartments. The sequence is that of V-type proton ATPase catalytic subunit A (vma-1) from Neurospora crassa (strain ATCC 24698 / 74-OR23-1A / CBS 708.71 / DSM 1257 / FGSC 987).